A 246-amino-acid polypeptide reads, in one-letter code: Mast cell protease 2 (246 aa).

The signal sequence occupies residues methionine 1 to alanine 19. The propeptide at glycine 20–glutamate 21 is activation peptide. Positions isoleucine 22 to lysine 244 constitute a Peptidase S1 domain. Cysteine 51 and cysteine 67 are oxidised to a cystine. Active-site charge relay system residues include histidine 66 and aspartate 109. An N-linked (GlcNAc...) asparagine glycan is attached at asparagine 120. 2 disulfide bridges follow: cysteine 143–cysteine 208 and cysteine 174–cysteine 187. Serine 202 functions as the Charge relay system in the catalytic mechanism.

It belongs to the peptidase S1 family. Granzyme subfamily.

The protein resides in the secreted. It is found in the cytoplasmic granule. Functionally, putative mast cell chymase. The chain is Mast cell protease 2 from Ovis aries (Sheep).